A 144-amino-acid chain; its full sequence is Large ribosomal subunit protein uL15 (144 aa).

Residues 1-54 (MRLNTLSPAPGRVTSRKRVGRGIGSGLGKTAGRGHKGLKSRSGGTVKPGFEGGQ) are disordered. Positions 21–31 (RGIGSGLGKTA) are enriched in gly residues.

It belongs to the universal ribosomal protein uL15 family. As to quaternary structure, part of the 50S ribosomal subunit.

Its function is as follows. Binds to the 23S rRNA. The polypeptide is Large ribosomal subunit protein uL15 (Teredinibacter turnerae (strain ATCC 39867 / T7901)).